A 308-amino-acid polypeptide reads, in one-letter code: Ribose 1,5-bisphosphate isomerase (308 aa).

Substrate contacts are provided by residues 24-27 (RGAG) and arginine 67. The active-site Proton acceptor is the cysteine 129. Aspartate 198 acts as the Proton donor in catalysis. Substrate contacts are provided by residues 208–209 (NK) and lysine 234.

The protein belongs to the eIF-2B alpha/beta/delta subunits family. R15P isomerase subfamily.

It catalyses the reaction alpha-D-ribose 1,5-bisphosphate = D-ribulose 1,5-bisphosphate. Functionally, catalyzes the isomerization of ribose 1,5-bisphosphate (R15P) to ribulose 1,5-bisphosphate (RuBP), the CO(2) acceptor and substrate for RubisCO. Functions in an archaeal AMP degradation pathway, together with AMP phosphorylase and RubisCO. The sequence is that of Ribose 1,5-bisphosphate isomerase from Methanocaldococcus jannaschii (strain ATCC 43067 / DSM 2661 / JAL-1 / JCM 10045 / NBRC 100440) (Methanococcus jannaschii).